We begin with the raw amino-acid sequence, 445 residues long: Phosphoglucosamine mutase (445 aa).

S99 serves as the catalytic Phosphoserine intermediate. Mg(2+) contacts are provided by S99, D242, D244, and D246. Phosphoserine is present on S99.

The protein belongs to the phosphohexose mutase family. Requires Mg(2+) as cofactor. In terms of processing, activated by phosphorylation.

The catalysed reaction is alpha-D-glucosamine 1-phosphate = D-glucosamine 6-phosphate. Its function is as follows. Catalyzes the conversion of glucosamine-6-phosphate to glucosamine-1-phosphate. This chain is Phosphoglucosamine mutase, found in Helicobacter pylori (strain P12).